Here is a 455-residue protein sequence, read N- to C-terminus: N-acetyl-S-(2-succino)cysteine lyase (455 aa).

Residue 106–107 (TT) participates in fumarate binding. Catalysis depends on histidine 154, which acts as the Proton donor/acceptor. Arginine 233 is a fumarate binding site. Serine 277 acts as the Proton donor/acceptor in catalysis. Fumarate contacts are provided by residues serine 278 and 283–285 (KRN).

This sequence belongs to the lyase 1 family.

The enzyme catalyses N-acetyl-S-(2-succino)-L-cysteine = N-acetyl-L-cysteine + fumarate. It participates in amino-acid biosynthesis; L-cysteine biosynthesis. Its function is as follows. Catalyzes the cleavage of N-acetyl-S-(2-succino)cysteine into fumarate and N-acetylcysteine. Is involved in a S-(2-succino)cysteine (2SC) degradation pathway that allows the bacterium to recover cysteine from 2SC and to detoxify 2SC that may be a toxic metabolite. Can also perform the reverse reaction in vitro, and has minor activity against 2SC and other small molecule thiols. The protein is N-acetyl-S-(2-succino)cysteine lyase of Enterococcus italicus (strain DSM 15952 / CCUG 50447 / LMG 22039 / TP 1.5).